Consider the following 184-residue polypeptide: Large ribosomal subunit protein uL5 (184 aa).

Belongs to the universal ribosomal protein uL5 family. As to quaternary structure, part of the 50S ribosomal subunit; part of the 5S rRNA/L5/L18/L25 subcomplex. Contacts the 5S rRNA and the P site tRNA. Forms a bridge to the 30S subunit in the 70S ribosome.

Its function is as follows. This is one of the proteins that bind and probably mediate the attachment of the 5S RNA into the large ribosomal subunit, where it forms part of the central protuberance. In the 70S ribosome it contacts protein S13 of the 30S subunit (bridge B1b), connecting the 2 subunits; this bridge is implicated in subunit movement. Contacts the P site tRNA; the 5S rRNA and some of its associated proteins might help stabilize positioning of ribosome-bound tRNAs. The polypeptide is Large ribosomal subunit protein uL5 (Thermotoga maritima (strain ATCC 43589 / DSM 3109 / JCM 10099 / NBRC 100826 / MSB8)).